Here is a 234-residue protein sequence, read N- to C-terminus: Nuclear ubiquitous casein and cyclin-dependent kinase substrate 1 (234 aa).

Residues 1–234 (MSRPVRNRKV…SEDEASSGED (234 aa)) are disordered. Phosphotyrosine is present on Y13. Residues S14 and S19 each carry the phosphoserine modification. Position 26 is a phosphotyrosine (Y26). Basic residues predominate over residues 35–51 (KKIRSSPREAKNKRRSG). 6 positions are modified to phosphoserine: S54, S58, S61, S73, S75, and S79. Over residues 64-77 (KDVKTKKDDSHSAE) the composition is skewed to basic and acidic residues. A compositionally biased stretch (low complexity) spans 91–100 (QQRQAASKAA). The segment covering 111 to 124 (VGSEEEPEEDDEAP) has biased composition (acidic residues). Phosphoserine is present on residues S113, S130, S132, and S144. The span at 132 to 145 (SDEDFLMEDDDDSD) shows a compositional bias: acidic residues. A compositionally biased stretch (basic residues) spans 149–174 (SKKKNKKMVKKSKPERKEKKMPKPRL). A Phosphothreonine modification is found at T179. S181 bears the Phosphoserine mark. The segment covering 185 to 199 (GKAKVGRPTASKKSK) has biased composition (basic residues). T202 is subject to Phosphothreonine. 4 positions are modified to phosphoserine: S204, S214, S225, and S231. A compositionally biased stretch (acidic residues) spans 223-234 (EGSEDEASSGED).

Does not interact with RAD51. Phosphorylated in an ATM-dependent manner in response to DNA damage. Phosphorylated by CDK1 and casein kinase.

Its subcellular location is the nucleus. It localises to the chromosome. Chromatin-associated protein involved in DNA repair by promoting homologous recombination (HR). Binds double-stranded DNA (dsDNA) and secondary DNA structures, such as D-loop structures, but with less affinity than RAD51AP1. The protein is Nuclear ubiquitous casein and cyclin-dependent kinase substrate 1 (Nucks1) of Mus musculus (Mouse).